We begin with the raw amino-acid sequence, 240 residues long: Ubiquinone biosynthesis O-methyltransferase (240 aa).

Residues R44, G64, D85, and M129 each coordinate S-adenosyl-L-methionine.

It belongs to the methyltransferase superfamily. UbiG/COQ3 family.

The catalysed reaction is a 3-demethylubiquinol + S-adenosyl-L-methionine = a ubiquinol + S-adenosyl-L-homocysteine + H(+). The enzyme catalyses a 3-(all-trans-polyprenyl)benzene-1,2-diol + S-adenosyl-L-methionine = a 2-methoxy-6-(all-trans-polyprenyl)phenol + S-adenosyl-L-homocysteine + H(+). Its pathway is cofactor biosynthesis; ubiquinone biosynthesis. In terms of biological role, O-methyltransferase that catalyzes the 2 O-methylation steps in the ubiquinone biosynthetic pathway. This Escherichia coli (strain UTI89 / UPEC) protein is Ubiquinone biosynthesis O-methyltransferase.